Reading from the N-terminus, the 235-residue chain is Class B acid phosphatase (235 aa).

A signal peptide spans 1 to 22; sequence MKNLLKLSAIAILAASAVSTFA. The Nucleophile role is filled by D67. The Mg(2+) site is built by D67 and D69. D69 functions as the Proton donor in the catalytic mechanism. Residues 135-136 and K175 contribute to the substrate site; that span reads TG. A Mg(2+)-binding site is contributed by D190.

The protein belongs to the class B bacterial acid phosphatase family. Homotetramer. Mg(2+) serves as cofactor.

Its subcellular location is the periplasm. The enzyme catalyses a phosphate monoester + H2O = an alcohol + phosphate. Dephosphorylates several organic phosphate monoesters. Also has a phosphotransferase activity catalyzing the transfer of low-energy phosphate groups from organic phosphate monoesters to free hydroxyl groups of various organic compounds. The chain is Class B acid phosphatase from Haemophilus parainfluenzae (strain T3T1).